A 353-amino-acid chain; its full sequence is Fe(3+) ions import ATP-binding protein FbpC (353 aa).

One can recognise an ABC transporter domain in the interval 9-239 (VTFENVTKKF…PASAFIADFM (231 aa)). 41–48 (GPSGCGKT) is a binding site for ATP.

Belongs to the ABC transporter superfamily. Fe(3+) ion importer (TC 3.A.1.10) family. In terms of assembly, the complex is composed of two ATP-binding proteins (FbpC), two transmembrane proteins (FbpB) and a solute-binding protein (FbpA).

The protein localises to the cell inner membrane. It carries out the reaction Fe(3+)(out) + ATP + H2O = Fe(3+)(in) + ADP + phosphate + H(+). Functionally, part of the ABC transporter complex FbpABC involved in Fe(3+) ions import. Responsible for energy coupling to the transport system. The chain is Fe(3+) ions import ATP-binding protein FbpC from Brucella suis biovar 1 (strain 1330).